We begin with the raw amino-acid sequence, 449 residues long: MEHPLECADSCSLAMSWFCNKKCRGWGLMKRTVVASGLRSVVLLLLFIYFVQDVTAEMGHQRISGSAGDVLEDNPVGRLKVFIYDIPSKYNTDWLKKDPRCLTHMFAVEEYLHDFLTESPVRTLNPEEADWFYTPVYTTCDLTPNGLPLPFKSPRVMRSAISYISSHWPYWNRTDGADHFFVVPHDFAACFHYQEEKAIERGILPLLKRATLIQTFGQNHHVCLKEDSIVIPPYAPPERMQTRLNPPSTPRSIFAYFRGLFYDPGNDPEGGYYARGARAAIWENFKDNPLFDISTEHPATYYEDMQRAIFCLCPLGWAPWSPRLVEGVIFGCIPVIIADDIVLPFADAIPWEKIGVFVEEKDVPILDKILCTINHEEVLEKQRLLANPAMKQAMLFPRPAKPGDAFHQILNGLARKLPHDPSIYLQPGQSFLNWTEGPPGDLYPWGNDL.

Over 1–31 the chain is Cytoplasmic; the sequence is MEHPLECADSCSLAMSWFCNKKCRGWGLMKR. The chain crosses the membrane as a helical; Signal-anchor for type II membrane protein span at residues 32 to 52; that stretch reads TVVASGLRSVVLLLLFIYFVQ. Residues 53 to 449 are Lumenal-facing; the sequence is DVTAEMGHQR…GDLYPWGNDL (397 aa). Asn-172 and Asn-433 each carry an N-linked (GlcNAc...) asparagine glycan.

This sequence belongs to the glycosyltransferase 47 family. Mostly expressed in newly formed or expanding tissues.

The protein localises to the golgi apparatus membrane. Its function is as follows. Involved in the synthesis of glucuronoxylan hemicellulose in secondary cell walls. The sequence is that of Probable glucuronosyltransferase 47 A from Physcomitrium patens (Spreading-leaved earth moss).